The chain runs to 393 residues: Protein Njmu-R1 (393 aa).

The interval 1–74 (MLPSLQESLD…AETPSGDDFS (74 aa)) is disordered. Phosphoserine occurs at positions 8 and 18. Residues 9–24 (LDGDEKELESSEEGGS) show a composition bias toward acidic residues.

As to quaternary structure, interacts with TBC1D23; this interaction may be indirect.

Functionally, may have a role in spermatogenesis. This chain is Protein Njmu-R1, found in Mus musculus (Mouse).